Here is an 897-residue protein sequence, read N- to C-terminus: Alanine--tRNA ligase (897 aa).

Zn(2+) contacts are provided by histidine 581, histidine 585, cysteine 684, and histidine 688.

This sequence belongs to the class-II aminoacyl-tRNA synthetase family. Zn(2+) serves as cofactor.

It localises to the cytoplasm. The catalysed reaction is tRNA(Ala) + L-alanine + ATP = L-alanyl-tRNA(Ala) + AMP + diphosphate. In terms of biological role, catalyzes the attachment of alanine to tRNA(Ala) in a two-step reaction: alanine is first activated by ATP to form Ala-AMP and then transferred to the acceptor end of tRNA(Ala). Also edits incorrectly charged Ser-tRNA(Ala) and Gly-tRNA(Ala) via its editing domain. The sequence is that of Alanine--tRNA ligase from Mycobacterium sp. (strain JLS).